The following is a 235-amino-acid chain: Thiamine import ATP-binding protein ThiQ (235 aa).

The 229-residue stretch at Leu2–Ile230 folds into the ABC transporter domain. Gly32–Ser39 contacts ATP.

It belongs to the ABC transporter superfamily. Thiamine importer (TC 3.A.1.19.1) family. The complex is composed of two ATP-binding proteins (ThiQ), two transmembrane proteins (ThiP) and a solute-binding protein (ThiB).

The protein localises to the cell inner membrane. It catalyses the reaction thiamine(out) + ATP + H2O = thiamine(in) + ADP + phosphate + H(+). Functionally, part of the ABC transporter complex ThiBPQ involved in thiamine import. Responsible for energy coupling to the transport system. Is also involved in thiamine pyrophosphate (TPP) transport. The protein is Thiamine import ATP-binding protein ThiQ of Salmonella typhimurium (strain LT2 / SGSC1412 / ATCC 700720).